A 377-amino-acid polypeptide reads, in one-letter code: Peptide chain release factor 2 (377 aa).

The residue at position 257 (glutamine 257) is an N5-methylglutamine.

The protein belongs to the prokaryotic/mitochondrial release factor family. In terms of processing, methylated by PrmC. Methylation increases the termination efficiency of RF2.

Its subcellular location is the cytoplasm. Peptide chain release factor 2 directs the termination of translation in response to the peptide chain termination codons UGA and UAA. This is Peptide chain release factor 2 from Lactiplantibacillus plantarum (strain ATCC BAA-793 / NCIMB 8826 / WCFS1) (Lactobacillus plantarum).